Consider the following 122-residue polypeptide: Large ribosomal subunit protein uL14 (122 aa).

This sequence belongs to the universal ribosomal protein uL14 family. In terms of assembly, part of the 50S ribosomal subunit. Forms a cluster with proteins L3 and L19. In the 70S ribosome, L14 and L19 interact and together make contacts with the 16S rRNA in bridges B5 and B8.

Binds to 23S rRNA. Forms part of two intersubunit bridges in the 70S ribosome. The protein is Large ribosomal subunit protein uL14 of Shewanella woodyi (strain ATCC 51908 / MS32).